A 159-amino-acid chain; its full sequence is Transcriptional repressor NrdR (159 aa).

A zinc finger lies at 3-34; sequence CPFCHTPDTSVIDSRVSEEGDRIRRRRRCPHC. An ATP-cone domain is found at 49-139; it reads PQVVKQDGNR…VYRSFQGAAD (91 aa).

The protein belongs to the NrdR family. Requires Zn(2+) as cofactor.

Negatively regulates transcription of bacterial ribonucleotide reductase nrd genes and operons by binding to NrdR-boxes. This Nitrosospira multiformis (strain ATCC 25196 / NCIMB 11849 / C 71) protein is Transcriptional repressor NrdR.